Here is a 495-residue protein sequence, read N- to C-terminus: UDP-glycosyltransferase 73C6 (495 aa).

Residues S296, 356-358 (SPQ), 373-381 (HCGWNSTLE), and 395-398 (FADQ) contribute to the UDP-alpha-D-glucose site. The interval 449 to 475 (SDDAKERRRRAKELGESAHKAVEEGGS) is disordered. Basic and acidic residues predominate over residues 450 to 471 (DDAKERRRRAKELGESAHKAVE).

This sequence belongs to the UDP-glycosyltransferase family. As to expression, expressed in leaves and flowers, and at a very low level in roots.

Functionally, acts as a UDP-glucose:flavonol-3-O-glycoside-7-O-glucosyltransferase. 6- and 7-hydroxyflavone, but not 3- or 5-hydroxyflavone are accepted as substrates. Possesses low quercetin 3-O-glucosyltransferase, 7-O-glucosyltransferase and 4'-O-glucosyltransferase activities in vitro. The chain is UDP-glycosyltransferase 73C6 (UGT73C6) from Arabidopsis thaliana (Mouse-ear cress).